Reading from the N-terminus, the 344-residue chain is L-rhamnose-proton symporter (344 aa).

Transmembrane regions (helical) follow at residues 4-24 (AITM…CFYA), 38-58 (WSVG…ALLL), 68-88 (FSLS…IGNI), 101-121 (MGIG…TPII), 137-157 (TLLG…AGQL), 175-195 (LVLA…MNAA), 214-234 (LPSY…FCFI), 259-279 (VLLS…YAWG), 290-310 (ISWM…GLVL), and 323-343 (VLSL…IGMA).

The protein belongs to the L-rhamnose transporter (TC 2.A.7.6) family.

It localises to the cell inner membrane. The catalysed reaction is L-rhamnopyranose(in) + H(+)(in) = L-rhamnopyranose(out) + H(+)(out). Uptake of L-rhamnose across the cytoplasmic membrane with the concomitant transport of protons into the cell (symport system). In Shigella boydii serotype 18 (strain CDC 3083-94 / BS512), this protein is L-rhamnose-proton symporter.